The chain runs to 75 residues: Translational regulator CsrA (75 aa).

This sequence belongs to the CsrA/RsmA family. Homodimer; the beta-strands of each monomer intercalate to form a hydrophobic core, while the alpha-helices form wings that extend away from the core.

Its subcellular location is the cytoplasm. Functionally, a translational regulator that binds mRNA to regulate translation initiation and/or mRNA stability. Usually binds in the 5'-UTR at or near the Shine-Dalgarno sequence preventing ribosome-binding, thus repressing translation. Its main target seems to be the major flagellin gene, while its function is anatagonized by FliW. The protein is Translational regulator CsrA of Alkaliphilus metalliredigens (strain QYMF).